We begin with the raw amino-acid sequence, 262 residues long: Acyl-[acyl-carrier-protein]--UDP-N-acetylglucosamine O-acyltransferase (262 aa).

Belongs to the transferase hexapeptide repeat family. LpxA subfamily. As to quaternary structure, homotrimer.

It localises to the cytoplasm. The enzyme catalyses a (3R)-hydroxyacyl-[ACP] + UDP-N-acetyl-alpha-D-glucosamine = a UDP-3-O-[(3R)-3-hydroxyacyl]-N-acetyl-alpha-D-glucosamine + holo-[ACP]. It participates in glycolipid biosynthesis; lipid IV(A) biosynthesis; lipid IV(A) from (3R)-3-hydroxytetradecanoyl-[acyl-carrier-protein] and UDP-N-acetyl-alpha-D-glucosamine: step 1/6. Its function is as follows. Involved in the biosynthesis of lipid A, a phosphorylated glycolipid that anchors the lipopolysaccharide to the outer membrane of the cell. This Wigglesworthia glossinidia brevipalpis protein is Acyl-[acyl-carrier-protein]--UDP-N-acetylglucosamine O-acyltransferase.